Consider the following 326-residue polypeptide: MPRRPSSGRRVLKHQPLTFSPFMRLLSFASMARRDLSHPEDCQCSDEDISFDEKQKIPNLPRKGKEEQVSDSSDEEDSQEDVQADFEFFDPKPTDFHGVKILLQNYLDDKEWDLSSFVDCILEQTTVGTVVKVADDEDESVFALVTALNMARDKDNKCFRELKEFLRKVCSEKNIANNLEMLLEKKAQDVGLLVSQRVMNLPPQLLPPLYDGLFDEVSWAIEDEPTEKLRRSFRFKSYLLVTKIYKLKNPKQRKPRHGEEDIEDTVFLKPEDELFLELSSWSFTFPMRSQLVTSQEMKNYQLMGLVMAVEANKIPKFRQMLNSLID.

The tract at residues 37–81 (SHPEDCQCSDEDISFDEKQKIPNLPRKGKEEQVSDSSDEEDSQED) is disordered. Serine 45 is subject to Phosphoserine. The span at 72 to 81 (SSDEEDSQED) shows a compositional bias: acidic residues.

It belongs to the BCP1 family.

In Arabidopsis thaliana (Mouse-ear cress), this protein is Protein BCCIP homolog.